We begin with the raw amino-acid sequence, 678 residues long: uncharacterized protein (678 aa).

The next 2 helical transmembrane spans lie at 14-34 (LMFA…WTGL) and 180-200 (GAVI…IGGF).

The protein belongs to the mycobacterial PPE family.

The protein resides in the cell membrane. This is an uncharacterized protein from Mycobacterium tuberculosis (strain ATCC 25618 / H37Rv).